The following is a 120-amino-acid chain: Ribosome-binding factor A (120 aa).

Belongs to the RbfA family. Monomer. Binds 30S ribosomal subunits, but not 50S ribosomal subunits or 70S ribosomes.

It localises to the cytoplasm. In terms of biological role, one of several proteins that assist in the late maturation steps of the functional core of the 30S ribosomal subunit. Associates with free 30S ribosomal subunits (but not with 30S subunits that are part of 70S ribosomes or polysomes). Required for efficient processing of 16S rRNA. May interact with the 5'-terminal helix region of 16S rRNA. This chain is Ribosome-binding factor A, found in Dictyoglomus thermophilum (strain ATCC 35947 / DSM 3960 / H-6-12).